Here is a 609-residue protein sequence, read N- to C-terminus: mRNA-decapping enzyme 1B (609 aa).

Position 2 is an N-acetylalanine (alanine 2). Serine 147 carries the post-translational modification Phosphoserine. Tyrosine 191 carries the phosphotyrosine modification. Disordered regions lie at residues proline 201–glutamate 222 and threonine 243–arginine 264. Positions serine 205–leucine 219 are enriched in polar residues. 2 positions are modified to phosphoserine: serine 272 and serine 333. Disordered regions lie at residues threonine 326–asparagine 345 and threonine 359–valine 438. Over residues asparagine 336–asparagine 345 the composition is skewed to polar residues. Low complexity predominate over residues proline 368–alanine 378. Position 389 is a phosphothreonine (threonine 389). The segment covering glutamine 418–valine 438 has biased composition (polar residues). 2 positions are modified to phosphoserine: serine 440 and serine 503.

It belongs to the DCP1 family. As to quaternary structure, interacts with DCP1A.

It is found in the cytoplasm. The protein localises to the nucleus. The enzyme catalyses a 5'-end (N(7)-methyl 5'-triphosphoguanosine)-ribonucleoside in mRNA + H2O = N(7)-methyl-GDP + a 5'-end phospho-ribonucleoside in mRNA + 2 H(+). Its function is as follows. May play a role in the degradation of mRNAs, both in normal mRNA turnover and in nonsense-mediated mRNA decay. May remove the 7-methyl guanine cap structure from mRNA molecules, yielding a 5'-phosphorylated mRNA fragment and 7m-GDP. The chain is mRNA-decapping enzyme 1B (DCP1B) from Pongo abelii (Sumatran orangutan).